A 376-amino-acid polypeptide reads, in one-letter code: 1-deoxy-D-xylulose 5-phosphate reductoisomerase (376 aa).

Positions 12, 13, 14, 15, 39, and 116 each coordinate NADPH. K117 provides a ligand contact to 1-deoxy-D-xylulose 5-phosphate. Residue E118 participates in NADPH binding. Residue D142 participates in Mn(2+) binding. 1-deoxy-D-xylulose 5-phosphate-binding residues include S143, E144, S164, and H187. Residue E144 participates in Mn(2+) binding. G193 contributes to the NADPH binding site. Residues S200, N205, K206, and E209 each contribute to the 1-deoxy-D-xylulose 5-phosphate site. E209 lines the Mn(2+) pocket.

The protein belongs to the DXR family. Mg(2+) is required as a cofactor. Mn(2+) serves as cofactor.

It carries out the reaction 2-C-methyl-D-erythritol 4-phosphate + NADP(+) = 1-deoxy-D-xylulose 5-phosphate + NADPH + H(+). Its pathway is isoprenoid biosynthesis; isopentenyl diphosphate biosynthesis via DXP pathway; isopentenyl diphosphate from 1-deoxy-D-xylulose 5-phosphate: step 1/6. Its function is as follows. Catalyzes the NADPH-dependent rearrangement and reduction of 1-deoxy-D-xylulose-5-phosphate (DXP) to 2-C-methyl-D-erythritol 4-phosphate (MEP). This Thermotoga maritima (strain ATCC 43589 / DSM 3109 / JCM 10099 / NBRC 100826 / MSB8) protein is 1-deoxy-D-xylulose 5-phosphate reductoisomerase.